The primary structure comprises 430 residues: Protein trichome birefringence-like 24 (430 aa).

A helical; Signal-anchor for type II membrane protein membrane pass occupies residues 15–35 (VLLIKLISAILISFFAFRLFI). The GDS motif motif lies at 153-155 (GDS). A DCXHWCLPGXXDXWN motif motif is present at residues 406 to 420 (DCLHWCLPGPFDYLN).

Belongs to the PC-esterase family. TBL subfamily.

Its subcellular location is the membrane. Functionally, may act as a bridging protein that binds pectin and other cell wall polysaccharides. Probably involved in maintaining esterification of pectins. May be involved in the specific O-acetylation of cell wall polymers. This Arabidopsis thaliana (Mouse-ear cress) protein is Protein trichome birefringence-like 24 (TBL24).